Reading from the N-terminus, the 412-residue chain is Glutamate-1-semialdehyde 2,1-aminomutase (412 aa).

An N6-(pyridoxal phosphate)lysine modification is found at Lys-260.

The protein belongs to the class-III pyridoxal-phosphate-dependent aminotransferase family. HemL subfamily. Pyridoxal 5'-phosphate serves as cofactor.

The protein resides in the cytoplasm. The catalysed reaction is (S)-4-amino-5-oxopentanoate = 5-aminolevulinate. It participates in porphyrin-containing compound metabolism; protoporphyrin-IX biosynthesis; 5-aminolevulinate from L-glutamyl-tRNA(Glu): step 2/2. The chain is Glutamate-1-semialdehyde 2,1-aminomutase from Methanocorpusculum labreanum (strain ATCC 43576 / DSM 4855 / Z).